The following is a 201-amino-acid chain: Small ribosomal subunit protein uS4c (201 aa).

Positions 20-43 are disordered; it reads GLTSKRPRAGSDLRNQSRSGKRSQ. In terms of domain architecture, S4 RNA-binding spans 89–149; it reads MRLDNILFRL…DEQKSRALIQ (61 aa).

It belongs to the universal ribosomal protein uS4 family. In terms of assembly, part of the 30S ribosomal subunit. Contacts protein S5. The interaction surface between S4 and S5 is involved in control of translational fidelity.

Its subcellular location is the plastid. The protein localises to the chloroplast. In terms of biological role, one of the primary rRNA binding proteins, it binds directly to 16S rRNA where it nucleates assembly of the body of the 30S subunit. Functionally, with S5 and S12 plays an important role in translational accuracy. This is Small ribosomal subunit protein uS4c (rps4) from Buxus microphylla (Littleleaf boxwood).